Consider the following 228-residue polypeptide: Prolactin-2A1 (228 aa).

Positions 1–29 (MQLSITHPCCWTLRLLLVSNLLLWENVAL) are cleaved as a signal peptide. Disulfide bonds link cysteine 87–cysteine 203 and cysteine 220–cysteine 228.

Belongs to the somatotropin/prolactin family. Expressed specifically in the placenta. Highly expressed in invasive trophoblast cells lining the central placental vessel.

The protein localises to the secreted. The polypeptide is Prolactin-2A1 (Prl2a1) (Rattus norvegicus (Rat)).